Consider the following 57-residue polypeptide: uncharacterized protein (57 aa).

The segment at 34 to 57 (QGKRGETEGQIEISRKAGHPAPAF) is disordered.

This is an uncharacterized protein from Saccharomyces cerevisiae (strain ATCC 204508 / S288c) (Baker's yeast).